A 215-amino-acid chain; its full sequence is Cytochrome b6 (215 aa).

The helical transmembrane segment at 32–52 (IFYCLGGITLTCFLIQFATGF) threads the bilayer. Residue cysteine 35 coordinates heme c. Residues histidine 86 and histidine 100 each contribute to the heme b site. A run of 3 helical transmembrane segments spans residues 90–110 (ASMMVLMMILHVFRVYLTGGF), 116–136 (LTWVTGVVLAVITVSFGVTGY), and 186–206 (LHTFVLPWSIAVFMLMHFLMI). Heme b-binding residues include histidine 187 and histidine 202.

This sequence belongs to the cytochrome b family. PetB subfamily. In terms of assembly, the 4 large subunits of the cytochrome b6-f complex are cytochrome b6, subunit IV (17 kDa polypeptide, PetD), cytochrome f and the Rieske protein, while the 4 small subunits are PetG, PetL, PetM and PetN. The complex functions as a dimer. It depends on heme b as a cofactor. Requires heme c as cofactor.

It is found in the cellular thylakoid membrane. In terms of biological role, component of the cytochrome b6-f complex, which mediates electron transfer between photosystem II (PSII) and photosystem I (PSI), cyclic electron flow around PSI, and state transitions. The sequence is that of Cytochrome b6 from Synechococcus elongatus.